The chain runs to 159 residues: Photosystem II extrinsic protein U, chloroplastic (159 aa).

The protein belongs to the PsbU family. PSII is composed of 1 copy each of membrane proteins PsbA, PsbB, PsbC, PsbD, PsbE, PsbF, PsbH, PsbI, PsbJ, PsbK, PsbL, PsbM, PsbT, PsbX, PsbY, PsbZ, Psb30/Ycf12, at least 3 peripheral proteins of the oxygen-evolving complex and a large number of cofactors. It forms dimeric complexes. Part of the oxygen-evolving complex of photosystem II.

The protein localises to the plastid. The protein resides in the chloroplast thylakoid membrane. Functionally, one of the extrinsic, lumenal subunits of photosystem II (PSII). PSII is a light-driven water plastoquinone oxidoreductase, using light energy to abstract electrons from H(2)O, generating a proton gradient subsequently used for ATP formation. The extrinsic proteins stabilize the structure of photosystem II oxygen-evolving complex (OEC), the ion environment of oxygen evolution and protect the OEC against heat-induced inactivation. This Karenia brevis (Red tide dinoflagellate) protein is Photosystem II extrinsic protein U, chloroplastic.